Consider the following 253-residue polypeptide: Sulfate transporter CysZ (253 aa).

Transmembrane regions (helical) follow at residues 31–51 (FVILPLLVNIVLMGGAFWWLF), 72–92 (LSYLLWPIAVISVLLVFGYFF), 151–171 (IVLLILYFIPGIGQTIAPVLW), and 222–242 (IPVLNLFIMPVAVCGATAMWV).

The protein belongs to the CysZ family.

The protein resides in the cell inner membrane. Functionally, possibly involved in sulfate transport. Its function is as follows. High affinity, high specificity proton-dependent sulfate transporter, which mediates sulfate uptake. Provides the sulfur source for the cysteine synthesis pathway. The sequence is that of Sulfate transporter CysZ from Salmonella typhimurium (strain LT2 / SGSC1412 / ATCC 700720).